A 384-amino-acid chain; its full sequence is Monomeric sarcosine oxidase (384 aa).

6–36 (DVIVIGLGGMGSAAAHHLSARGARVLGLEKF) serves as a coordination point for FAD. Cys-315 bears the S-8alpha-FAD cysteine mark.

This sequence belongs to the MSOX/MTOX family. MSOX subfamily. As to quaternary structure, monomer. FAD serves as cofactor.

Its subcellular location is the cytoplasm. The enzyme catalyses sarcosine + O2 + H2O = formaldehyde + glycine + H2O2. Catalyzes the oxidative demethylation of sarcosine. The chain is Monomeric sarcosine oxidase from Streptomyces avermitilis (strain ATCC 31267 / DSM 46492 / JCM 5070 / NBRC 14893 / NCIMB 12804 / NRRL 8165 / MA-4680).